A 1165-amino-acid polypeptide reads, in one-letter code: Sperm-associated antigen 5 (1165 aa).

The disordered stretch occupies residues 1–23 (MWRVKTLNLGLSPSPQKGKPAMS). Phosphoserine occurs at positions 12, 14, 66, 161, 321, 333, and 342. The segment at 431–457 (TVPHREARDSSTQTDSSPCGVTKTPKH) is disordered. Polar residues predominate over residues 440–449 (SSTQTDSSPC). The segment at 453–821 (KTPKHLQDSK…LRDTVDSLRA (369 aa)) is interaction with KNSTRN. A coiled-coil region spans residues 509–856 (RSKTLVSSCS…LLAEQLQSLT (348 aa)). The tract at residues 875–907 (PSTGSAPAQEHPLSNDSSISEQTPTAAVDEVPE) is disordered. Polar residues predominate over residues 876–897 (STGSAPAQEHPLSNDSSISEQT). A coiled-coil region spans residues 937 to 1146 (DLEKSLAEMS…IQHVYETLLS (210 aa)). A Phosphoserine; by GSK3-beta modification is found at Ser946.

In terms of assembly, homodimer, with a globular head domain and a long stalk. Homooligomer; the globular head domains associate, resulting in aster-like structures. Binds to microtubules in the mitotic spindle. Interacts with DCLRE1B/Apollo. Part of an astrin (SPAG5)-kinastrin (SKAP) complex containing KNSTRN, SPAG5, PLK1, DYNLL1 and SGO2A. Interacts with KNSTRN. Interacts with RPTOR; this interaction competes with RPTOR binding to MTOR, resulting in decreased mTORC1 formation. Interacts with G3BP1. The complex formed with G3BP1 and RPTOR is increased by oxidative stress. Interacts with OSBPL8, PCM1 and CDK5RAP2. Interacts (via C-terminus) with NUMA1 (via C-terminus); this interaction promotes the recruitment of SPAG5 to the microtubules at spindle poles in a dynein-dynactin-dependent manner. Interacts with DYNLL1. In terms of processing, phosphorylated by AURKA. Detected in testis, but not in the other tissues tested.

The protein localises to the cytoplasm. It is found in the cytoskeleton. It localises to the spindle. The protein resides in the spindle pole. Its subcellular location is the chromosome. The protein localises to the centromere. It is found in the kinetochore. It localises to the midbody. The protein resides in the microtubule organizing center. Its subcellular location is the centrosome. The protein localises to the centriolar satellite. Essential component of the mitotic spindle required for normal chromosome segregation and progression into anaphase. Required for chromosome alignment, normal timing of sister chromatid segregation, and maintenance of spindle pole architecture. In complex with SKAP, promotes stable microtubule-kinetochore attachments. May contribute to the regulation of separase activity. May regulate AURKA localization to mitotic spindle, but not to centrosomes and CCNB1 localization to both mitotic spindle and centrosomes. Involved in centriole duplication. Required for CDK5RAP22, CEP152, WDR62 and CEP63 centrosomal localization and promotes the centrosomal localization of CDK2. In non-mitotic cells, upon stress induction, inhibits mammalian target of rapamycin complex 1 (mTORC1) association and recruits the mTORC1 component RPTOR to stress granules (SGs), thereby preventing mTORC1 hyperactivation-induced apoptosis. May enhance GSK3B-mediated phosphorylation of other substrates, such as MAPT/TAU. The chain is Sperm-associated antigen 5 (Spag5) from Mus musculus (Mouse).